Here is a 72-residue protein sequence, read N- to C-terminus: uncharacterized protein (72 aa).

Residues 1 to 17 (MSLGLAIAVGIVLGVVA) form the signal peptide.

This is an uncharacterized protein from Schizosaccharomyces pombe (strain 972 / ATCC 24843) (Fission yeast).